We begin with the raw amino-acid sequence, 734 residues long: Photosystem I P700 chlorophyll a apoprotein A2 (734 aa).

8 consecutive transmembrane segments (helical) span residues 46–69 (IFASHFGQLAIIFLWTSGNLFHVA), 135–158 (LYTGALFLLFLSTLSLVAGWLHLQ), 175–199 (LNHHLSGLFGVSSLAWTGHLVHVAI), 273–291 (IAHHHLAIAFIFLIAGHMY), 330–353 (IHFQLGLALASLGVITSLVAQHMY), 369–395 (AALYTHHQYIAGFIMTGAFAHGAIFFI), 417–439 (AIISHLSWASLFLGFHTLGLYVH), and 517–535 (FLVHHAIALGLHTTTLILV). [4Fe-4S] cluster is bound by residues cysteine 559 and cysteine 568. 2 helical membrane passes run 575-596 (AFYLAVFWMLNTIGWVTFYWHW) and 643-665 (LSVWAWMFLFGHLVWATGFMFLI). Residues histidine 654, methionine 662, and tyrosine 670 each coordinate chlorophyll a. Tryptophan 671 is a binding site for phylloquinone. Residues 707–727 (LVGLAHFSVGYIFTYAAFLIA) form a helical membrane-spanning segment.

The protein belongs to the PsaA/PsaB family. As to quaternary structure, the PsaA/B heterodimer binds the P700 chlorophyll special pair and subsequent electron acceptors. PSI consists of a core antenna complex that captures photons, and an electron transfer chain that converts photonic excitation into a charge separation. The eukaryotic PSI reaction center is composed of at least 11 subunits. P700 is a chlorophyll a/chlorophyll a' dimer, A0 is one or more chlorophyll a, A1 is one or both phylloquinones and FX is a shared 4Fe-4S iron-sulfur center. is required as a cofactor.

It localises to the plastid. The protein resides in the chloroplast thylakoid membrane. The enzyme catalyses reduced [plastocyanin] + hnu + oxidized [2Fe-2S]-[ferredoxin] = oxidized [plastocyanin] + reduced [2Fe-2S]-[ferredoxin]. Functionally, psaA and PsaB bind P700, the primary electron donor of photosystem I (PSI), as well as the electron acceptors A0, A1 and FX. PSI is a plastocyanin-ferredoxin oxidoreductase, converting photonic excitation into a charge separation, which transfers an electron from the donor P700 chlorophyll pair to the spectroscopically characterized acceptors A0, A1, FX, FA and FB in turn. Oxidized P700 is reduced on the lumenal side of the thylakoid membrane by plastocyanin. This is Photosystem I P700 chlorophyll a apoprotein A2 from Agrostis stolonifera (Creeping bentgrass).